The sequence spans 66 residues: Large ribosomal subunit protein bL35c (66 aa).

Belongs to the bacterial ribosomal protein bL35 family.

It is found in the plastid. Its subcellular location is the chloroplast. The protein is Large ribosomal subunit protein bL35c of Guillardia theta (Cryptophyte).